The primary structure comprises 672 residues: Nuclear hormone receptor family member nhr-5 (672 aa).

The segment covering 1 to 19 (MSSGGNSSNVNRNSGSSNV) has biased composition (low complexity). Residues 1–38 (MSSGGNSSNVNRNSGSSNVITLNDSDEETEDSNLGSSS) form a disordered region. The nuclear receptor DNA-binding region spans 40 to 115 (TNLCKVCGAE…EGMNPAYVRP (76 aa)). 2 NR C4-type zinc fingers span residues 43-63 (CKVC…CVGC) and 79-98 (CAAN…CRSC). The NR LBD domain occupies 155–424 (EMRTILMTLL…PLLTDLFGCF (270 aa)). The disordered stretch occupies residues 550–577 (NIQGPSHLPQCGSTVTQRPTVPSSTTSS). The span at 562 to 577 (STVTQRPTVPSSTTSS) shows a compositional bias: low complexity.

Belongs to the nuclear hormone receptor family.

Its subcellular location is the nucleus. Orphan nuclear receptor. The polypeptide is Nuclear hormone receptor family member nhr-5 (nhr-5) (Caenorhabditis elegans).